A 297-amino-acid chain; its full sequence is Nicotinate-nucleotide pyrophosphorylase [carboxylating] (297 aa).

Positions 8-12 are important for hexamer formation; the sequence is LLLPP. Residues arginine 102, 138 to 139, 160 to 161, lysine 171, glutamate 201, aspartate 222, 248 to 250, and glycine 270 each bind quinolinate; these read RK, HR, and SGG.

The protein belongs to the NadC/ModD family. Hexamer formed by 3 homodimers.

The enzyme catalyses nicotinate beta-D-ribonucleotide + CO2 + diphosphate = quinolinate + 5-phospho-alpha-D-ribose 1-diphosphate + 2 H(+). It functions in the pathway cofactor biosynthesis; NAD(+) biosynthesis; nicotinate D-ribonucleotide from quinolinate: step 1/1. Its activity is regulated as follows. Activity toward QA is slightly repressed by phosphoribosylpyrophosphate (PRPP) in both a competitive and a non-competitive manner. Competitively inhibited by phthalic acid (PHT). Involved in the catabolism of quinolinic acid (QA). This chain is Nicotinate-nucleotide pyrophosphorylase [carboxylating] (QPRT), found in Homo sapiens (Human).